Reading from the N-terminus, the 60-residue chain is Bowman-Birk type proteinase inhibitor C1 (60 aa).

4 cysteine pairs are disulfide-bonded: cysteine 5–cysteine 21, cysteine 11–cysteine 19, cysteine 28–cysteine 35, and cysteine 32–cysteine 49.

Belongs to the Bowman-Birk serine protease inhibitor family. As to expression, expressed in bulb (at protein level).

In terms of biological role, serine protease inhibitor. Strongly inhibits trypsin (Ki = 0.22 nM) and very weakly inhibits chymotrypsin (Ki = 1200 nM). Does not inhibit bacterial subtilisin. In Hyacinthus orientalis (Common hyacinth), this protein is Bowman-Birk type proteinase inhibitor C1.